A 355-amino-acid chain; its full sequence is Glutamine synthetase root isozyme 4 (355 aa).

In terms of domain architecture, GS beta-grasp spans 19–99 (IIAEYIWIGG…VMCDCYTPAG (81 aa)). Positions 37–66 (ARTLPGPVTDPSKLPKWNYDGSSTGQAPGE) are disordered. One can recognise a GS catalytic domain in the interval 106 to 355 (KRYSAAKIFS…IAETTIVWKP (250 aa)).

It belongs to the glutamine synthetase family. As to quaternary structure, homooctamer. Found in all the tissues examined with higher expression found in tissues of the root, stem and seedling shoot.

It is found in the cytoplasm. The enzyme catalyses L-glutamate + NH4(+) + ATP = L-glutamine + ADP + phosphate + H(+). In terms of biological role, plays a role in the flow of nitrogen into nitrogenous organic compounds. The protein is Glutamine synthetase root isozyme 4 (GLN5) of Zea mays (Maize).